Reading from the N-terminus, the 78-residue chain is DNA-directed RNA polymerase subunit Rpo5 (78 aa).

It belongs to the archaeal Rpo5/eukaryotic RPB5 RNA polymerase subunit family. In terms of assembly, part of the RNA polymerase complex.

It is found in the cytoplasm. The enzyme catalyses RNA(n) + a ribonucleoside 5'-triphosphate = RNA(n+1) + diphosphate. Functionally, DNA-dependent RNA polymerase (RNAP) catalyzes the transcription of DNA into RNA using the four ribonucleoside triphosphates as substrates. This chain is DNA-directed RNA polymerase subunit Rpo5, found in Methanothrix thermoacetophila (strain DSM 6194 / JCM 14653 / NBRC 101360 / PT) (Methanosaeta thermophila).